The chain runs to 511 residues: Adenosine deaminase 2 (511 aa).

Positions Met1–Ser29 are cleaved as a signal peptide. The tract at residues Ile30–Asn100 is dimerization. Residues His112 and His114 each contribute to the Zn(2+) site. Asp115 serves as a coordination point for substrate. Asn127 carries an N-linked (GlcNAc...) asparagine glycan. The segment at Asn127–Asn185 is PRB domain. Cys137 and Cys159 are oxidised to a cystine. Residues Asn174 and Asn185 are each glycosylated (N-linked (GlcNAc...) asparagine). Substrate contacts are provided by residues Trp204 to Phe211, His293, and Gly326. His356 provides a ligand contact to Zn(2+). Glu359 (proton donor) is an active-site residue. Asn378 is a glycosylation site (N-linked (GlcNAc...) asparagine). Catalysis depends on His384, which acts as the Proton acceptor. A Zn(2+)-binding site is contributed by Asp441. Residue Asp442 coordinates substrate.

This sequence belongs to the metallo-dependent hydrolases superfamily. Adenosine and AMP deaminases family. ADGF subfamily. In terms of assembly, homodimer. Interacts with adenosine receptors. Binds heparin. Zn(2+) serves as cofactor. As to expression, detected in blood plasma (at protein level). Widely expressed, with most abundant expression in human adult heart, lung, lymphoblasts, and placenta as well as fetal lung, liver, and kidney. In embryo, expressed in the outflow tract and atrium of the developing heart, the VII/VIII cranial nerve ganglion, and the notochord.

It localises to the secreted. It carries out the reaction adenosine + H2O + H(+) = inosine + NH4(+). Its function is as follows. Adenosine deaminase that may contribute to the degradation of extracellular adenosine, a signaling molecule that controls a variety of cellular responses. Requires elevated adenosine levels for optimal enzyme activity. Binds to cell surfaces via proteoglycans and may play a role in the regulation of cell proliferation and differentiation, independently of its enzyme activity. This Homo sapiens (Human) protein is Adenosine deaminase 2.